The sequence spans 404 residues: Bifunctional enzyme IspD/IspF (404 aa).

The 2-C-methyl-D-erythritol 4-phosphate cytidylyltransferase stretch occupies residues 1–243; it reads MQAEEQFSCG…KLTRMAIPDV (243 aa). The tract at residues 244–404 is 2-C-methyl-D-erythritol 2,4-cyclodiphosphate synthase; it reads RTGNGYDVHQ…TVVYASGGDA (161 aa). A divalent metal cation-binding residues include D250 and H252. Residues 250–252 and 276–277 each bind 4-CDP-2-C-methyl-D-erythritol 2-phosphate; these read DVH and HS. Position 284 (H284) interacts with a divalent metal cation. 4-CDP-2-C-methyl-D-erythritol 2-phosphate contacts are provided by residues 298 to 300, 374 to 377, F381, and R384; these read DIG and TTNE.

This sequence in the N-terminal section; belongs to the IspD/TarI cytidylyltransferase family. IspD subfamily. In the C-terminal section; belongs to the IspF family. The cofactor is a divalent metal cation.

It catalyses the reaction 2-C-methyl-D-erythritol 4-phosphate + CTP + H(+) = 4-CDP-2-C-methyl-D-erythritol + diphosphate. It carries out the reaction 4-CDP-2-C-methyl-D-erythritol 2-phosphate = 2-C-methyl-D-erythritol 2,4-cyclic diphosphate + CMP. Its pathway is isoprenoid biosynthesis; isopentenyl diphosphate biosynthesis via DXP pathway; isopentenyl diphosphate from 1-deoxy-D-xylulose 5-phosphate: step 2/6. The protein operates within isoprenoid biosynthesis; isopentenyl diphosphate biosynthesis via DXP pathway; isopentenyl diphosphate from 1-deoxy-D-xylulose 5-phosphate: step 4/6. Bifunctional enzyme that catalyzes the formation of 4-diphosphocytidyl-2-C-methyl-D-erythritol from CTP and 2-C-methyl-D-erythritol 4-phosphate (MEP) (IspD), and catalyzes the conversion of 4-diphosphocytidyl-2-C-methyl-D-erythritol 2-phosphate (CDP-ME2P) to 2-C-methyl-D-erythritol 2,4-cyclodiphosphate (ME-CPP) with a corresponding release of cytidine 5-monophosphate (CMP) (IspF). The protein is Bifunctional enzyme IspD/IspF of Sinorhizobium medicae (strain WSM419) (Ensifer medicae).